Here is a 251-residue protein sequence, read N- to C-terminus: CDP-diacylglycerol pyrophosphatase (251 aa).

A helical transmembrane segment spans residues 5 to 25; sequence GYFLLAVIVIVAAAGVGYWKF.

The protein belongs to the Cdh family.

It is found in the cell inner membrane. It catalyses the reaction a CDP-1,2-diacyl-sn-glycerol + H2O = a 1,2-diacyl-sn-glycero-3-phosphate + CMP + 2 H(+). It participates in phospholipid metabolism; CDP-diacylglycerol degradation; phosphatidate from CDP-diacylglycerol: step 1/1. The polypeptide is CDP-diacylglycerol pyrophosphatase (Salmonella enteritidis PT4 (strain P125109)).